Consider the following 268-residue polypeptide: NADH-quinone oxidoreductase subunit B 1 (268 aa).

4 residues coordinate [4Fe-4S] cluster: Cys42, Cys43, Cys108, and Cys138.

Belongs to the complex I 20 kDa subunit family. In terms of assembly, NDH-1 is composed of 14 different subunits. Subunits NuoB, C, D, E, F, and G constitute the peripheral sector of the complex. [4Fe-4S] cluster is required as a cofactor.

The protein resides in the cell membrane. The catalysed reaction is a quinone + NADH + 5 H(+)(in) = a quinol + NAD(+) + 4 H(+)(out). Its function is as follows. NDH-1 shuttles electrons from NADH, via FMN and iron-sulfur (Fe-S) centers, to quinones in the respiratory chain. The immediate electron acceptor for the enzyme in this species is believed to be ubiquinone. Couples the redox reaction to proton translocation (for every two electrons transferred, four hydrogen ions are translocated across the cytoplasmic membrane), and thus conserves the redox energy in a proton gradient. This is NADH-quinone oxidoreductase subunit B 1 from Roseiflexus sp. (strain RS-1).